The primary structure comprises 445 residues: tRNA-2-methylthio-N(6)-dimethylallyladenosine synthase (445 aa).

The MTTase N-terminal domain maps to 3 to 124; sequence KKLYIKTYGC…LPELISKVVR (122 aa). [4Fe-4S] cluster is bound by residues Cys-12, Cys-48, Cys-87, Cys-162, Cys-166, and Cys-169. The region spanning 148 to 380 is the Radical SAM core domain; sequence YPQGASSFIS…QQELATQQLA (233 aa). The region spanning 383–445 is the TRAM domain; sequence QSCVGSTMRV…ALNSLTGEIL (63 aa).

It belongs to the methylthiotransferase family. MiaB subfamily. As to quaternary structure, monomer. [4Fe-4S] cluster serves as cofactor.

It is found in the cytoplasm. The enzyme catalyses N(6)-dimethylallyladenosine(37) in tRNA + (sulfur carrier)-SH + AH2 + 2 S-adenosyl-L-methionine = 2-methylsulfanyl-N(6)-dimethylallyladenosine(37) in tRNA + (sulfur carrier)-H + 5'-deoxyadenosine + L-methionine + A + S-adenosyl-L-homocysteine + 2 H(+). Its function is as follows. Catalyzes the methylthiolation of N6-(dimethylallyl)adenosine (i(6)A), leading to the formation of 2-methylthio-N6-(dimethylallyl)adenosine (ms(2)i(6)A) at position 37 in tRNAs that read codons beginning with uridine. This chain is tRNA-2-methylthio-N(6)-dimethylallyladenosine synthase, found in Rickettsia prowazekii (strain Madrid E).